The following is a 159-amino-acid chain: Phosphopantetheine adenylyltransferase (159 aa).

T9 is a binding site for substrate. ATP contacts are provided by residues 9–10 (TF) and H17. Residues K41, L73, and R87 each coordinate substrate. Residues 88–90 (GLR), E98, and 123–129 (YMFISAT) each bind ATP.

The protein belongs to the bacterial CoaD family. Homohexamer. Requires Mg(2+) as cofactor.

The protein localises to the cytoplasm. It catalyses the reaction (R)-4'-phosphopantetheine + ATP + H(+) = 3'-dephospho-CoA + diphosphate. It functions in the pathway cofactor biosynthesis; coenzyme A biosynthesis; CoA from (R)-pantothenate: step 4/5. In terms of biological role, reversibly transfers an adenylyl group from ATP to 4'-phosphopantetheine, yielding dephospho-CoA (dPCoA) and pyrophosphate. This Nitrosomonas europaea (strain ATCC 19718 / CIP 103999 / KCTC 2705 / NBRC 14298) protein is Phosphopantetheine adenylyltransferase.